We begin with the raw amino-acid sequence, 200 residues long: H-2 class I histocompatibility antigen, Q9 alpha chain (200 aa).

The signal sequence occupies residues Met-1–Ala-21. Positions Gly-22–Gly-111 are alpha-1. Residues Gly-22–Leu-200 are Extracellular-facing. Asn-107 is a glycosylation site (N-linked (GlcNAc...) asparagine). Positions Gly-112–Leu-200 are alpha-2. Cys-122 and Cys-185 are oxidised to a cystine.

This sequence belongs to the MHC class I family. As to quaternary structure, heterodimer of an alpha chain and a beta chain (beta-2-microglobulin).

It localises to the membrane. In terms of biological role, involved in the presentation of foreign antigens to the immune system. The sequence is that of H-2 class I histocompatibility antigen, Q9 alpha chain (H2-Q9) from Mus musculus (Mouse).